The sequence spans 132 residues: Small ribosomal subunit protein uS8 (132 aa).

This sequence belongs to the universal ribosomal protein uS8 family. As to quaternary structure, part of the 30S ribosomal subunit. Contacts proteins S5 and S12.

Functionally, one of the primary rRNA binding proteins, it binds directly to 16S rRNA central domain where it helps coordinate assembly of the platform of the 30S subunit. The protein is Small ribosomal subunit protein uS8 of Flavobacterium psychrophilum (strain ATCC 49511 / DSM 21280 / CIP 103535 / JIP02/86).